We begin with the raw amino-acid sequence, 484 residues long: Ribosome biogenesis protein NOP53 (484 aa).

Disordered regions lie at residues 1-51 (MAAG…WRRL) and 304-356 (ESDG…AARK). An N-acetylalanine modification is found at Ala-2. Residue Ser-29 is modified to Phosphoserine. A compositionally biased stretch (basic residues) spans 35–49 (RRRRRGPRNKKRGWR). Residues 148–437 (KEELWEKLAK…SELSGSLRTL (290 aa)) form a mediates interaction with CDKN2A/isoform tumor suppressor ARF region. A Phosphoserine modification is found at Ser-305. Positions 336-348 (PEKRMEKKTEQQR) are enriched in basic and acidic residues. Positions 348–392 (RRREKAARKLRVQQAALRAARLQHQELFRLRGIKAQVARRLAELA) are mediates interaction with human herpesvirus 8 protein ORF16. 2 nucleolar localization signal regions span residues 353–401 (AARK…RRIR) and 402–484 (RLAE…EIQL).

It belongs to the NOP53 family. Homooligomer. Interacts with PTEN; regulates PTEN phosphorylation and increases its stability. Interacts with RPL11; retains RPL11 into the nucleolus. Interacts with CDKN2A/isoform tumor suppressor ARF; the interaction is direct and promotes ARF nucleoplasmic relocalization and ubiquitin-mediated proteasomal degradation. Interacts with NPM1; the interaction is direct and competitive with MYC. Interacts with NF2 (via FERM domain); the interaction is direct. Interacts with p53/TP53 (via the oligomerization region); the interaction is direct and may prevent the MDM2-mediated proteasomal degradation of p53/TP53. Interacts with RIGI; may regulate RIGI through USP15-mediated 'Lys-63'-linked deubiquitination. Interacts with UBTF. Post-translationally, ubiquitin-mediated proteasomal degradation is regulated by c-JUN. It is associated with relocalization to the nucleoplasm and decreased homooligomerization. Phosphorylated upon DNA damage probably by ATM and DNA-PK; may regulate NOP53 degradation.

It is found in the nucleus. It localises to the nucleolus. Its subcellular location is the nucleoplasm. Functionally, nucleolar protein which is involved in the integration of the 5S RNP into the ribosomal large subunit during ribosome biogenesis. In ribosome biogenesis, may also play a role in rRNA transcription. Also functions as a nucleolar sensor that regulates the activation of p53/TP53 in response to ribosome biogenesis perturbation, DNA damage and other stress conditions. DNA damage or perturbation of ribosome biogenesis disrupt the interaction between NOP53 and RPL11 allowing RPL11 transport to the nucleoplasm where it can inhibit MDM2 and allow p53/TP53 activation. It may also positively regulate the function of p53/TP53 in cell cycle arrest and apoptosis through direct interaction, preventing its MDM2-dependent ubiquitin-mediated proteasomal degradation. Originally identified as a tumor suppressor, it may also play a role in cell proliferation and apoptosis by positively regulating the stability of PTEN, thereby antagonizing the PI3K-AKT/PKB signaling pathway. May also inhibit cell proliferation and increase apoptosis through its interaction with NF2. May negatively regulate NPM1 by regulating its nucleoplasmic localization, oligomerization and ubiquitin-mediated proteasomal degradation. Thereby, may prevent NPM1 interaction with MYC and negatively regulate transcription mediated by the MYC-NPM1 complex. May also regulate cellular aerobic respiration. In the cellular response to viral infection, may play a role in the attenuation of interferon-beta through the inhibition of RIGI. This chain is Ribosome biogenesis protein NOP53, found in Mus musculus (Mouse).